Here is a 233-residue protein sequence, read N- to C-terminus: Large ribosomal subunit protein uL1 (233 aa).

Belongs to the universal ribosomal protein uL1 family. Part of the 50S ribosomal subunit.

Binds directly to 23S rRNA. The L1 stalk is quite mobile in the ribosome, and is involved in E site tRNA release. Functionally, protein L1 is also a translational repressor protein, it controls the translation of the L11 operon by binding to its mRNA. This is Large ribosomal subunit protein uL1 from Psychrobacter sp. (strain PRwf-1).